Consider the following 128-residue polypeptide: Large ribosomal subunit protein bL20c (128 aa).

It belongs to the bacterial ribosomal protein bL20 family.

It is found in the plastid. The protein resides in the chloroplast. In terms of biological role, binds directly to 23S ribosomal RNA and is necessary for the in vitro assembly process of the 50S ribosomal subunit. It is not involved in the protein synthesizing functions of that subunit. This chain is Large ribosomal subunit protein bL20c, found in Nicotiana sylvestris (Wood tobacco).